The chain runs to 181 residues: Crossover junction endodeoxyribonuclease RuvC (181 aa).

Active-site residues include Asp-7, Glu-67, and Asp-139. Asp-7, Glu-67, and Asp-139 together coordinate Mg(2+).

The protein belongs to the RuvC family. As to quaternary structure, homodimer which binds Holliday junction (HJ) DNA. The HJ becomes 2-fold symmetrical on binding to RuvC with unstacked arms; it has a different conformation from HJ DNA in complex with RuvA. In the full resolvosome a probable DNA-RuvA(4)-RuvB(12)-RuvC(2) complex forms which resolves the HJ. Requires Mg(2+) as cofactor.

Its subcellular location is the cytoplasm. The catalysed reaction is Endonucleolytic cleavage at a junction such as a reciprocal single-stranded crossover between two homologous DNA duplexes (Holliday junction).. In terms of biological role, the RuvA-RuvB-RuvC complex processes Holliday junction (HJ) DNA during genetic recombination and DNA repair. Endonuclease that resolves HJ intermediates. Cleaves cruciform DNA by making single-stranded nicks across the HJ at symmetrical positions within the homologous arms, yielding a 5'-phosphate and a 3'-hydroxyl group; requires a central core of homology in the junction. The consensus cleavage sequence is 5'-(A/T)TT(C/G)-3'. Cleavage occurs on the 3'-side of the TT dinucleotide at the point of strand exchange. HJ branch migration catalyzed by RuvA-RuvB allows RuvC to scan DNA until it finds its consensus sequence, where it cleaves and resolves the cruciform DNA. In Ralstonia pickettii (strain 12J), this protein is Crossover junction endodeoxyribonuclease RuvC.